Here is a 431-residue protein sequence, read N- to C-terminus: O-Mevalon transferase macI (431 aa).

N-linked (GlcNAc...) asparagine glycosylation is present at Asn-176. 4 helical membrane passes run Ile-198–Met-218, Leu-301–Thr-321, Tyr-336–Ile-356, and Leu-404–Ala-424.

It belongs to the wax synthase family.

Its subcellular location is the membrane. It participates in secondary metabolite biosynthesis; terpenoid biosynthesis. O-Mevalon transferase; part of the gene cluster that mediates the biosynthesis of macrophorins, isoprenoid epoxycyclohexenones containing cyclized drimane moieties. The first step of the pathway is the synthesis of 6-methylsalicylic acid (6-MSA) by the polyketide synthase macA. 6-MSA is then converted to m-cresol by the decarboxylase macB. The cytochrome P450 monooxygenase macC then catalyzes the oxidation of m-cresol to toluquinol. Epoxidation of toluquinol is then performed by the short chain dehydrogenase macD, with the help of macE, and a further prenylation by macG leads to 7-deacetoxyyanuthone A. The next step is the hydroxylation of C-22 of 7-deacetoxyyanuthone A by the cytochrome P450 monooxygenase macH to yield 22-deacetylyanuthone A. O-Mevalon transferase macI then attaches mevalon to the hydroxyl group of 22-deacetylyanuthone A to produce yanuthone E. The terpene cyclase macJ catalyzes the cyclization of 22-deacetylyanuthone A to macrophorin A. MacJ is also able to catalyze cyclization of yanuthone E and 7-deacetoxyyanuthone A to their corresponding macrophorins. The macJ products can be further modified by macH and macJ, as well as by the FAD-dependent monooxygenase macF, to produce additional macrophorins, including 4'-oxomacrophorin A, 4'-oxomacrophorin D and 4'-oxomacrophorin E. The chain is O-Mevalon transferase macI from Penicillium terrestre.